Here is a 612-residue protein sequence, read N- to C-terminus: Chaperone protein DnaK (612 aa).

Position 174 is a phosphothreonine; by autocatalysis (threonine 174). Residues glycine 578–lysine 612 are disordered. Residues asparagine 586–asparagine 598 show a composition bias toward polar residues.

The protein belongs to the heat shock protein 70 family.

Functionally, acts as a chaperone. This chain is Chaperone protein DnaK, found in Thermoanaerobacter sp. (strain X514).